The following is a 563-amino-acid chain: Cytochrome b (563 aa).

12 helical membrane passes run 36–61 (SYWL…LLYY), 81–104 (SVLL…HMFR), 119–141 (WVTG…SLVS), 193–220 (RLLG…ERYG), 255–276 (LSIV…ANIN), 326–345 (ILTI…LPFL), 358–379 (FWTW…WGYL), 387–409 (TSAQ…YLWP), 436–454 (ILLG…FNFI), 458–476 (TLIN…IYAL), 505–527 (IAFF…MWTL), and 539–557 (MDLG…LYHY). Heme contacts are provided by histidine 87 and histidine 101. Residues histidine 198 and histidine 212 each coordinate heme.

The protein belongs to the cytochrome b family. In terms of assembly, it is a component of at least 2 distinct terminal oxidases, the quinol oxidase (SoxABC) and the alternate quinol oxidase with the core components SoxM and a Rieske Fe-S protein.

The protein resides in the cell membrane. Binds 2 heme groups (b586 and b606) which are not covalently bound to the protein. The sequence is that of Cytochrome b (soxC) from Sulfolobus acidocaldarius (strain ATCC 33909 / DSM 639 / JCM 8929 / NBRC 15157 / NCIMB 11770).